The primary structure comprises 720 residues: Glycine--tRNA ligase beta subunit (720 aa).

The protein belongs to the class-II aminoacyl-tRNA synthetase family. In terms of assembly, tetramer of two alpha and two beta subunits.

The protein localises to the cytoplasm. The enzyme catalyses tRNA(Gly) + glycine + ATP = glycyl-tRNA(Gly) + AMP + diphosphate. This Dinoroseobacter shibae (strain DSM 16493 / NCIMB 14021 / DFL 12) protein is Glycine--tRNA ligase beta subunit.